The following is a 277-amino-acid chain: Undecaprenyl-diphosphatase (277 aa).

5 helical membrane passes run 85 to 105, 109 to 129, 188 to 208, 218 to 238, and 256 to 276; these read VNIV…AGAI, LFAP…ILWV, ATEF…VYSV, ADIP…FLCV, and YRIG…VVWA.

This sequence belongs to the UppP family.

The protein resides in the cell inner membrane. It catalyses the reaction di-trans,octa-cis-undecaprenyl diphosphate + H2O = di-trans,octa-cis-undecaprenyl phosphate + phosphate + H(+). Catalyzes the dephosphorylation of undecaprenyl diphosphate (UPP). Confers resistance to bacitracin. This Herminiimonas arsenicoxydans protein is Undecaprenyl-diphosphatase.